The chain runs to 53 residues: MGVKSALFIMAVFAAANVQYVLAACAETGAVCVHSDECCSGACSPVFNYCLPQ.

An N-terminal signal peptide occupies residues 1–18 (MGVKSALFIMAVFAAANV). Intrachain disulfides connect Cys25–Cys39, Cys32–Cys43, and Cys38–Cys50.

Its subcellular location is the secreted. The sequence is that of Conotoxin-like peptide 1 (CTL-1) from Orgyia pseudotsugata multicapsid polyhedrosis virus (OpMNPV).